The primary structure comprises 230 residues: MLRSCAMRLRTLGATPARRPEATRRLFSSEEVVCKDYALPNPSWTKDLRLLFDQFMKKCEDGSWKRLPSYRQNPPQALQEFQTHFVDSKFKKEEQMSKAQQFTRSLEEGLGFEYAMFYNKAEKRIVCLFQGGLHLQGMPGFVHGGAIATIIDITAGMCAFSEGIVMTANLNIDYKKPIPLLSVVVVNSQLQKIEGRKLFVSCTIQSTDEKTLHTQATALFIKLDPDKPLT.

The N-terminal 27 residues, 1–27 (MLRSCAMRLRTLGATPARRPEATRRLF), are a transit peptide targeting the mitochondrion. Residues S28 and S29 each carry the phosphoserine modification. 2 positions are modified to N6-succinyllysine: K46 and K57. An N6-acetyllysine modification is found at K65. N6-succinyllysine occurs at positions 89 and 98. Catalysis depends on D152, which acts as the Proton donor/acceptor. Substrate-binding positions include K175 and 196-197 (RK). N6-succinyllysine is present on K197.

This sequence belongs to the THEM4/THEM5 thioesterase family. Homodimer and homotetramer. Interacts with AKT1 in the cytosol. Phosphorylated.

The protein resides in the cell membrane. Its subcellular location is the cell projection. The protein localises to the ruffle membrane. It is found in the cytoplasm. It localises to the mitochondrion. The protein resides in the mitochondrion inner membrane. Its subcellular location is the mitochondrion intermembrane space. It catalyses the reaction hexadecanoyl-CoA + H2O = hexadecanoate + CoA + H(+). The enzyme catalyses octanoyl-CoA + H2O = octanoate + CoA + H(+). It carries out the reaction decanoyl-CoA + H2O = decanoate + CoA + H(+). The catalysed reaction is dodecanoyl-CoA + H2O = dodecanoate + CoA + H(+). It catalyses the reaction tetradecanoyl-CoA + H2O = tetradecanoate + CoA + H(+). The enzyme catalyses (9Z)-octadecenoyl-CoA + H2O = (9Z)-octadecenoate + CoA + H(+). It carries out the reaction (5Z,8Z,11Z,14Z)-eicosatetraenoyl-CoA + H2O = (5Z,8Z,11Z,14Z)-eicosatetraenoate + CoA + H(+). Functionally, has acyl-CoA thioesterase activity towards medium and long-chain (C14 to C18) fatty acyl-CoA substrates, and probably plays a role in mitochondrial fatty acid metabolism. Plays a role in the apoptotic process, possibly via its regulation of AKT1 activity. The chain is Acyl-coenzyme A thioesterase THEM4 (Them4) from Rattus norvegicus (Rat).